A 411-amino-acid polypeptide reads, in one-letter code: Growth-regulating factor 7 (411 aa).

The QLQ domain occupies 38 to 73 (PFTPTQWMELEHQALIYKHIVANAPVPAGLLLPIRR). One can recognise a WRC domain in the interval 108–152 (DSEPGRCRRTDGKKWRCSRDAVVDQKYCERHINRGRHRSRKHVEG). 2 consecutive short sequence motifs (bipartite nuclear localization signal) follow at residues 113 to 123 (RCRRTDGKKWR) and 141 to 148 (RGRHRSRK). The disordered stretch occupies residues 333–369 (FFTNTSSASDDKGKSRHPPSLNLLADGHTTSPQLQSP). The span at 360–369 (HTTSPQLQSP) shows a compositional bias: polar residues.

The protein belongs to the GRF family.

The protein resides in the nucleus. In terms of biological role, transcription activator that plays a regulatory role in gibberellin-induced stem elongation. This chain is Growth-regulating factor 7 (GRF7), found in Oryza sativa subsp. japonica (Rice).